The following is a 648-amino-acid chain: Dystrotelin (648 aa).

The ZZ-type zinc-finger motif lies at 223–279 (QHRVHCHACKAFPITGLRYRCLKCLNVHLCQSCFLTERRSRKHKPSHSVLEYCTQPS). Zn(2+) contacts are provided by Cys-228, Cys-231, Cys-243, Cys-246, Cys-252, Cys-255, His-265, and His-269. Positions 367–446 (QRETAELQKD…LDTVRHLLSL (80 aa)) form a coiled coil. Positions 455–474 (SHSNLQLEQDGSINENNWTQ) are enriched in polar residues. Disordered regions lie at residues 455–509 (SHSN…DTLY) and 536–557 (QREE…EGLP). Over residues 479–502 (KPHESSSTEHEVEERGTRQERRFE) the composition is skewed to basic and acidic residues. The segment covering 538–548 (EEEELQEEEEG) has biased composition (acidic residues).

It localises to the cell membrane. The polypeptide is Dystrotelin (dytn) (Danio rerio (Zebrafish)).